Consider the following 87-residue polypeptide: Conotoxin Ca6.2 (87 aa).

Positions 1–19 are cleaved as a signal peptide; sequence MHTLEMLLLVLLLVPLAPG. Residues 20-52 constitute a propeptide that is removed on maturation; the sequence is EGDGQAVGGDRNPSEARRAYKRLLQRPARRMDR. 3 disulfides stabilise this stretch: Cys55–Cys64, Cys58–Cys70, and Cys63–Cys84.

The protein belongs to the conotoxin Q superfamily. Expressed by the venom duct.

It localises to the secreted. The chain is Conotoxin Ca6.2 from Conus caracteristicus (Characteristic cone).